The following is a 585-amino-acid chain: Arginine--tRNA ligase (585 aa).

The 'HIGH' region signature appears at proline 127–histidine 137.

This sequence belongs to the class-I aminoacyl-tRNA synthetase family. In terms of assembly, monomer.

It is found in the cytoplasm. The catalysed reaction is tRNA(Arg) + L-arginine + ATP = L-arginyl-tRNA(Arg) + AMP + diphosphate. The polypeptide is Arginine--tRNA ligase (Borrelia garinii subsp. bavariensis (strain ATCC BAA-2496 / DSM 23469 / PBi) (Borreliella bavariensis)).